Consider the following 333-residue polypeptide: Biotin synthase (333 aa).

The Radical SAM core domain occupies 51–278 (RAIQLSTLMS…KSYVRLSAGR (228 aa)). [4Fe-4S] cluster is bound by residues Cys-66, Cys-70, and Cys-73. [2Fe-2S] cluster contacts are provided by Cys-110, Cys-141, Cys-201, and Arg-273.

It belongs to the radical SAM superfamily. Biotin synthase family. Homodimer. [4Fe-4S] cluster serves as cofactor. The cofactor is [2Fe-2S] cluster.

It catalyses the reaction (4R,5S)-dethiobiotin + (sulfur carrier)-SH + 2 reduced [2Fe-2S]-[ferredoxin] + 2 S-adenosyl-L-methionine = (sulfur carrier)-H + biotin + 2 5'-deoxyadenosine + 2 L-methionine + 2 oxidized [2Fe-2S]-[ferredoxin]. Its pathway is cofactor biosynthesis; biotin biosynthesis; biotin from 7,8-diaminononanoate: step 2/2. Its function is as follows. Catalyzes the conversion of dethiobiotin (DTB) to biotin by the insertion of a sulfur atom into dethiobiotin via a radical-based mechanism. This Haemophilus influenzae (strain 86-028NP) protein is Biotin synthase.